A 233-amino-acid chain; its full sequence is Glutathione S-transferase U15 (233 aa).

The GST N-terminal domain maps to 5–85; it reads EEVKLLGTWY…YIDETWNSSG (81 aa). Residues 15 to 16, 42 to 43, 56 to 57, and 69 to 70 each bind glutathione; these read SP, SK, KV, and VS. In terms of domain architecture, GST C-terminal spans 92–219; the sequence is HPYDRALARF…VPDIDKVAKF (128 aa). The residue at position 158 (Thr158) is a Phosphothreonine.

This sequence belongs to the GST superfamily. Tau family.

The protein resides in the cytoplasm. The protein localises to the cytosol. It carries out the reaction RX + glutathione = an S-substituted glutathione + a halide anion + H(+). Its function is as follows. May be involved in the conjugation of reduced glutathione to a wide number of exogenous and endogenous hydrophobic electrophiles and have a detoxification role against certain herbicides. This Arabidopsis thaliana (Mouse-ear cress) protein is Glutathione S-transferase U15 (GSTU15).